Consider the following 237-residue polypeptide: Ribonuclease PH (237 aa).

Phosphate contacts are provided by residues arginine 86 and 124–126 (GTR).

It belongs to the RNase PH family. In terms of assembly, homohexameric ring arranged as a trimer of dimers.

The enzyme catalyses tRNA(n+1) + phosphate = tRNA(n) + a ribonucleoside 5'-diphosphate. In terms of biological role, phosphorolytic 3'-5' exoribonuclease that plays an important role in tRNA 3'-end maturation. Removes nucleotide residues following the 3'-CCA terminus of tRNAs; can also add nucleotides to the ends of RNA molecules by using nucleoside diphosphates as substrates, but this may not be physiologically important. Probably plays a role in initiation of 16S rRNA degradation (leading to ribosome degradation) during starvation. The protein is Ribonuclease PH of Beijerinckia indica subsp. indica (strain ATCC 9039 / DSM 1715 / NCIMB 8712).